The sequence spans 132 residues: uncharacterized protein (132 aa).

The 71-residue stretch at 45–115 (VHMEKHKLKI…VVIVTTAEGK (71 aa)) folds into the BIG2 domain.

It to B.anthracis BA1245.

This is an uncharacterized protein from Bacillus cereus (strain ATCC 14579 / DSM 31 / CCUG 7414 / JCM 2152 / NBRC 15305 / NCIMB 9373 / NCTC 2599 / NRRL B-3711).